Consider the following 548-residue polypeptide: Putative malate oxidoreductase [NAD] (548 aa).

The active-site Proton donor is Tyr-96. Lys-169 functions as the Proton acceptor in the catalytic mechanism. A divalent metal cation-binding residues include Glu-240, Asp-241, and Asp-264. NAD(+) contacts are provided by residues 297-300 (AGTA), Asn-410, and Asn-455.

Belongs to the malic enzymes family. Mg(2+) is required as a cofactor. Mn(2+) serves as cofactor.

The catalysed reaction is (S)-malate + NAD(+) = pyruvate + CO2 + NADH. It carries out the reaction oxaloacetate + H(+) = pyruvate + CO2. The sequence is that of Putative malate oxidoreductase [NAD] (mez) from Mycobacterium tuberculosis (strain CDC 1551 / Oshkosh).